Here is a 299-residue protein sequence, read N- to C-terminus: Pseudouridine-5'-phosphate glycosidase (299 aa).

The active-site Proton donor is the E23. Residues K84 and V104 each coordinate substrate. D136 is a binding site for Mn(2+). S138–D140 provides a ligand contact to substrate. The active-site Nucleophile is the K157.

Belongs to the pseudouridine-5'-phosphate glycosidase family. In terms of assembly, homotrimer. Requires Mn(2+) as cofactor.

It carries out the reaction D-ribose 5-phosphate + uracil = psi-UMP + H2O. Its function is as follows. Catalyzes the reversible cleavage of pseudouridine 5'-phosphate (PsiMP) to ribose 5-phosphate and uracil. Functions biologically in the cleavage direction, as part of a pseudouridine degradation pathway. This Solibacter usitatus (strain Ellin6076) protein is Pseudouridine-5'-phosphate glycosidase.